The chain runs to 78 residues: Acyl carrier protein 1 (78 aa).

The 76-residue stretch at 2 to 77 (STIEERVKKI…EAIDYIVAHQ (76 aa)) folds into the Carrier domain. S37 is modified (O-(pantetheine 4'-phosphoryl)serine).

It belongs to the acyl carrier protein (ACP) family. In terms of processing, 4'-phosphopantetheine is transferred from CoA to a specific serine of apo-ACP by AcpS. This modification is essential for activity because fatty acids are bound in thioester linkage to the sulfhydryl of the prosthetic group.

It localises to the cytoplasm. It participates in lipid metabolism; fatty acid biosynthesis. In terms of biological role, carrier of the growing fatty acid chain in fatty acid biosynthesis. The chain is Acyl carrier protein 1 from Pseudomonas aeruginosa (strain ATCC 15692 / DSM 22644 / CIP 104116 / JCM 14847 / LMG 12228 / 1C / PRS 101 / PAO1).